A 385-amino-acid polypeptide reads, in one-letter code: Benzoylsuccinyl-CoA thiolase subunit BbsB (385 aa).

A CoA-binding site is contributed by Arg19. Residue Cys84 is the Acyl-thioester intermediate of the active site. Gly121, Arg193, Cys204, and Cys205 together coordinate CoA.

Belongs to the thiolase-like superfamily. Thiolase family. Heterotetramer composed of two BbsA subunits and two BbsB subunits. BbsB forms homodimeric subcomplexes. Both BbsA and BbsB are essential for enzymatic activity.

It carries out the reaction (S)-2-benzoylsuccinyl-CoA + CoA = benzoyl-CoA + succinyl-CoA. It functions in the pathway xenobiotic degradation; toluene degradation. Functionally, component of the BbsAB thiolase complex, which catalyzes the thiolytic cleavage of (S)-2-benzoylsuccinyl-CoA to succinyl-CoA and benzoyl-CoA, the final step of anaerobic toluene metabolism. This is Benzoylsuccinyl-CoA thiolase subunit BbsB from Thauera aromatica.